Reading from the N-terminus, the 239-residue chain is Lactate utilization protein A (239 aa).

It belongs to the LutA/YkgE family.

Is involved in L-lactate degradation and allows cells to grow with lactate as the sole carbon source. This chain is Lactate utilization protein A, found in Bacillus cereus (strain G9842).